A 644-amino-acid polypeptide reads, in one-letter code: Threonine--tRNA ligase (644 aa).

The TGS domain maps to 8 to 70 (VKAMVITLRD…EEDGELEILT (63 aa)). Residues 251–541 (DHRKLGKELD…LTEHFAGAFP (291 aa)) form a catalytic region. Zn(2+) is bound by residues Cys342, His393, and His518.

The protein belongs to the class-II aminoacyl-tRNA synthetase family. Homodimer. The cofactor is Zn(2+).

Its subcellular location is the cytoplasm. It carries out the reaction tRNA(Thr) + L-threonine + ATP = L-threonyl-tRNA(Thr) + AMP + diphosphate + H(+). Catalyzes the attachment of threonine to tRNA(Thr) in a two-step reaction: L-threonine is first activated by ATP to form Thr-AMP and then transferred to the acceptor end of tRNA(Thr). Also edits incorrectly charged L-seryl-tRNA(Thr). The protein is Threonine--tRNA ligase of Caldanaerobacter subterraneus subsp. tengcongensis (strain DSM 15242 / JCM 11007 / NBRC 100824 / MB4) (Thermoanaerobacter tengcongensis).